The following is a 1515-amino-acid chain: Lysophospholipase nte1 (1515 aa).

The Cytoplasmic segment spans residues 1–59 (MESLSNLGNAMSSVLSETTSTTATAILADPTEALSSVVALASDAVSKATSDVVPEHTPT). Residues 60–80 (SWFTIILWLLHRISSVLYFVI) traverse the membrane as a helical segment. The Lumenal segment spans residues 81 to 102 (KLTTITTPTFLFNIFSTSLTVT). The chain crosses the membrane as a helical span at residues 103–123 (MNATTLVLIMLFMMAGVTWVV). The Cytoplasmic segment spans residues 124–1515 (RYRYLNMYSR…RTMAPRRASI (1392 aa)). Disordered stretches follow at residues 278–303 (MHDT…GYPM), 519–580 (VTAT…TPRN), and 617–639 (VNPD…SRGG). Polar residues-rich tracts occupy residues 543 to 554 (LTNTQQLKSGPA) and 566 to 579 (PRPQ…STPR). A nucleoside 3',5'-cyclic phosphate is bound by residues 670 to 789 (SPVP…LAGY) and 835 to 955 (RLTE…IAAR). Residues 1212-1376 (LVLGGGGARG…IDNLTVSRMK (165 aa)) enclose the PNPLA domain. Residues 1216-1221 (GGGARG) carry the GXGXXG motif. The GXSXG signature appears at 1243–1247 (GTSIG). The active-site Nucleophile is the Ser-1245. Asp-1363 serves as the catalytic Proton acceptor. Residues 1363 to 1365 (DGG) carry the DGA/G motif.

Belongs to the NTE family.

The protein resides in the endoplasmic reticulum membrane. The enzyme catalyses a 1-acyl-sn-glycero-3-phosphocholine + H2O = sn-glycerol 3-phosphocholine + a fatty acid + H(+). Its activity is regulated as follows. Inhibited by organophosphorus esters. Its function is as follows. Intracellular phospholipase B that catalyzes the double deacylation of phosphatidylcholine (PC) to glycerophosphocholine (GroPCho). Plays an important role in membrane lipid homeostasis. Responsible for the rapid PC turnover in response to inositol, elevated temperatures, or when choline is present in the growth medium. This is Lysophospholipase nte1 (nte1) from Neurospora crassa (strain ATCC 24698 / 74-OR23-1A / CBS 708.71 / DSM 1257 / FGSC 987).